We begin with the raw amino-acid sequence, 154 residues long: Large ribosomal subunit protein uL13 (154 aa).

It belongs to the universal ribosomal protein uL13 family. Part of the 50S ribosomal subunit.

This protein is one of the early assembly proteins of the 50S ribosomal subunit, although it is not seen to bind rRNA by itself. It is important during the early stages of 50S assembly. The polypeptide is Large ribosomal subunit protein uL13 (Brucella abortus (strain S19)).